A 279-amino-acid chain; its full sequence is Thymidylate synthase (279 aa).

133–134 contributes to the dUMP binding site; that stretch reads RR. Residue Cys154 is the Nucleophile of the active site. DUMP contacts are provided by residues 178–181, Asn189, and 219–221; these read RSND and HIY. Residue Asp181 coordinates (6R)-5,10-methylene-5,6,7,8-tetrahydrofolate. Ala278 contacts (6R)-5,10-methylene-5,6,7,8-tetrahydrofolate.

This sequence belongs to the thymidylate synthase family. Bacterial-type ThyA subfamily. As to quaternary structure, homodimer.

It localises to the cytoplasm. It catalyses the reaction dUMP + (6R)-5,10-methylene-5,6,7,8-tetrahydrofolate = 7,8-dihydrofolate + dTMP. It functions in the pathway pyrimidine metabolism; dTTP biosynthesis. In terms of biological role, catalyzes the reductive methylation of 2'-deoxyuridine-5'-monophosphate (dUMP) to 2'-deoxythymidine-5'-monophosphate (dTMP) while utilizing 5,10-methylenetetrahydrofolate (mTHF) as the methyl donor and reductant in the reaction, yielding dihydrofolate (DHF) as a by-product. This enzymatic reaction provides an intracellular de novo source of dTMP, an essential precursor for DNA biosynthesis. In Streptococcus pneumoniae (strain ATCC 700669 / Spain 23F-1), this protein is Thymidylate synthase.